Reading from the N-terminus, the 293-residue chain is ATP synthase gamma chain (293 aa).

Belongs to the ATPase gamma chain family. As to quaternary structure, F-type ATPases have 2 components, CF(1) - the catalytic core - and CF(0) - the membrane proton channel. CF(1) has five subunits: alpha(3), beta(3), gamma(1), delta(1), epsilon(1). CF(0) has three main subunits: a, b and c.

Its subcellular location is the cell inner membrane. Its function is as follows. Produces ATP from ADP in the presence of a proton gradient across the membrane. The gamma chain is believed to be important in regulating ATPase activity and the flow of protons through the CF(0) complex. The chain is ATP synthase gamma chain from Gluconacetobacter diazotrophicus (strain ATCC 49037 / DSM 5601 / CCUG 37298 / CIP 103539 / LMG 7603 / PAl5).